Reading from the N-terminus, the 385-residue chain is Flap endonuclease 1 (385 aa).

An N-domain region spans residues 1–104 (MGILGLSKLI…GELAKRAERR (104 aa)). Mg(2+) is bound at residue Asp-34. DNA-binding residues include Arg-47 and Arg-70. Mg(2+)-binding residues include Asp-86, Glu-158, Glu-160, Asp-179, and Asp-181. Residues 122-253 (GIEKFNRRLV…KRAIELINTY (132 aa)) form an I-domain region. DNA is bound at residue Glu-158. Positions 231 and 233 each coordinate DNA. Asp-233 is a Mg(2+) binding site. The interval 336–344 (TQVRLDSFF) is interaction with PCNA. Residues 346–385 (TLPSTPNATNAAKRKAEEAKKSANNKKAKTSGGGRGRRPK) form a disordered region. A compositionally biased stretch (basic residues) spans 368 to 385 (ANNKKAKTSGGGRGRRPK).

Belongs to the XPG/RAD2 endonuclease family. FEN1 subfamily. As to quaternary structure, interacts with PCNA. Three molecules of FEN1 bind to one PCNA trimer with each molecule binding to one PCNA monomer. PCNA stimulates the nuclease activity without altering cleavage specificity. It depends on Mg(2+) as a cofactor. In terms of processing, phosphorylated. Phosphorylation upon DNA damage induces relocalization to the nuclear plasma.

The protein localises to the nucleus. It localises to the nucleolus. Its subcellular location is the nucleoplasm. It is found in the mitochondrion. Functionally, structure-specific nuclease with 5'-flap endonuclease and 5'-3' exonuclease activities involved in DNA replication and repair. During DNA replication, cleaves the 5'-overhanging flap structure that is generated by displacement synthesis when DNA polymerase encounters the 5'-end of a downstream Okazaki fragment. It enters the flap from the 5'-end and then tracks to cleave the flap base, leaving a nick for ligation. Also involved in the long patch base excision repair (LP-BER) pathway, by cleaving within the apurinic/apyrimidinic (AP) site-terminated flap. Acts as a genome stabilization factor that prevents flaps from equilibrating into structures that lead to duplications and deletions. Also possesses 5'-3' exonuclease activity on nicked or gapped double-stranded DNA, and exhibits RNase H activity. Also involved in replication and repair of rDNA and in repairing mitochondrial DNA. The chain is Flap endonuclease 1 from Drosophila melanogaster (Fruit fly).